Consider the following 360-residue polypeptide: Peptide chain release factor 1 (360 aa).

An N5-methylglutamine modification is found at Q235. Positions 281–307 (ERQRADSERSADRRSQVGSGDRSERIR) are enriched in basic and acidic residues. The disordered stretch occupies residues 281-311 (ERQRADSERSADRRSQVGSGDRSERIRTYNF).

The protein belongs to the prokaryotic/mitochondrial release factor family. Methylated by PrmC. Methylation increases the termination efficiency of RF1.

The protein resides in the cytoplasm. Functionally, peptide chain release factor 1 directs the termination of translation in response to the peptide chain termination codons UAG and UAA. This chain is Peptide chain release factor 1, found in Rhizobium meliloti (strain 1021) (Ensifer meliloti).